A 132-amino-acid polypeptide reads, in one-letter code: Fluoride-specific ion channel FluC 2 (132 aa).

4 helical membrane passes run 5–25, 34–54, 59–79, and 95–115; these read VAVF…NLLG, TFIE…FFAA, PLVQ…MSAF, and VLYL…GIVI. 2 residues coordinate Na(+): G71 and T74.

It belongs to the fluoride channel Fluc/FEX (TC 1.A.43) family.

It is found in the cell membrane. It carries out the reaction fluoride(in) = fluoride(out). With respect to regulation, na(+) is not transported, but it plays an essential structural role and its presence is essential for fluoride channel function. Functionally, fluoride-specific ion channel. Important for reducing fluoride concentration in the cell, thus reducing its toxicity. The polypeptide is Fluoride-specific ion channel FluC 2 (Bacillus licheniformis (strain ATCC 14580 / DSM 13 / JCM 2505 / CCUG 7422 / NBRC 12200 / NCIMB 9375 / NCTC 10341 / NRRL NRS-1264 / Gibson 46)).